The chain runs to 122 residues: UPF0102 protein XCV0816 (122 aa).

This sequence belongs to the UPF0102 family.

This Xanthomonas euvesicatoria pv. vesicatoria (strain 85-10) (Xanthomonas campestris pv. vesicatoria) protein is UPF0102 protein XCV0816.